We begin with the raw amino-acid sequence, 569 residues long: Proline--tRNA ligase (569 aa).

Belongs to the class-II aminoacyl-tRNA synthetase family. ProS type 1 subfamily. Homodimer.

It is found in the cytoplasm. It catalyses the reaction tRNA(Pro) + L-proline + ATP = L-prolyl-tRNA(Pro) + AMP + diphosphate. Its function is as follows. Catalyzes the attachment of proline to tRNA(Pro) in a two-step reaction: proline is first activated by ATP to form Pro-AMP and then transferred to the acceptor end of tRNA(Pro). As ProRS can inadvertently accommodate and process non-cognate amino acids such as alanine and cysteine, to avoid such errors it has two additional distinct editing activities against alanine. One activity is designated as 'pretransfer' editing and involves the tRNA(Pro)-independent hydrolysis of activated Ala-AMP. The other activity is designated 'posttransfer' editing and involves deacylation of mischarged Ala-tRNA(Pro). The misacylated Cys-tRNA(Pro) is not edited by ProRS. The chain is Proline--tRNA ligase from Dehalococcoides mccartyi (strain ATCC BAA-2100 / JCM 16839 / KCTC 5957 / BAV1).